Here is a 400-residue protein sequence, read N- to C-terminus: NADPH dehydrogenase 3 (400 aa).

Residues T38 and Q115 each contribute to the FMN site. The substrate site is built by H192 and N195. The active-site Proton donor is the Y197. Positions 244 and 349 each coordinate FMN. Y376 provides a ligand contact to substrate.

As to quaternary structure, homodimer or heterodimer with OYE2. FMN is required as a cofactor.

The catalysed reaction is A + NADPH + H(+) = AH2 + NADP(+). In terms of biological role, flavin-dependent enoate reductase that catalyzes the chemo- and stereoslective hydrogenation of electron-poor alkenes. The enzyme is reduced by NADPH, and oxygen, quinones, and alpha,beta-unsaturated aldehydes and ketones can act as electron acceptors to complete catalytic turnover. The physiological oxidant remains elusive. Has a prooxidant activity, increasing reactive oxygen species (ROS) levels when overexpressed. Formation of OYE2-OYE3 heterodimers contribute to the induction of programmed cell death upon oxidative stress. This Saccharomyces cerevisiae (strain ATCC 204508 / S288c) (Baker's yeast) protein is NADPH dehydrogenase 3.